Consider the following 305-residue polypeptide: uncharacterized protein (305 aa).

A compositionally biased stretch (basic residues) spans 1–10 (MLWAQRKKRK). The segment at 1 to 30 (MLWAQRKKRKATTETTEDKPAESHRPNDSW) is disordered. A compositionally biased stretch (basic and acidic residues) spans 16-27 (TEDKPAESHRPN). The residue at position 39 (S39) is a Phosphoserine. A compositionally biased stretch (polar residues) spans 92–101 (QKISGTSVSK). Residues 92–114 (QKISGTSVSKEMQRESGKSPSME) form a disordered region. S158 carries the post-translational modification Phosphoserine. A compositionally biased stretch (low complexity) spans 197-208 (SHHGNQSHQNHN). Residues 197–305 (SHHGNQSHQN…VNRRNQIYDS (109 aa)) are disordered. Composition is skewed to polar residues over residues 209–221 (TYPCHQNNQSRSV) and 231–244 (LSHQGYPSYSSHQN). Positions 247-293 (GHPSQQGHSSHSNQQGHLGLSSQQGHPSQSSHQSHQGQPGHPNHQSH) are enriched in low complexity. Positions 294–305 (SLVNRRNQIYDS) are enriched in polar residues.

This is an uncharacterized protein from Rattus norvegicus (Rat).